The primary structure comprises 335 residues: S-adenosylmethionine decarboxylase proenzyme (335 aa).

Active-site residues include Glu12 and Glu15. The active-site Schiff-base intermediate with substrate; via pyruvic acid is Ser70. Ser70 carries the pyruvic acid (Ser); by autocatalysis modification. The active-site Proton donor; for catalytic activity is Cys84. Active-site proton acceptor; for processing activity residues include Ser231 and His245.

The protein belongs to the eukaryotic AdoMetDC family. The cofactor is pyruvate. In terms of processing, is synthesized initially as an inactive proenzyme. Formation of the active enzyme involves a self-maturation process in which the active site pyruvoyl group is generated from an internal serine residue via an autocatalytic post-translational modification. Two non-identical subunits are generated from the proenzyme in this reaction, and the pyruvate is formed at the N-terminus of the alpha chain, which is derived from the carboxyl end of the proenzyme. The post-translation cleavage follows an unusual pathway, termed non-hydrolytic serinolysis, in which the side chain hydroxyl group of the serine supplies its oxygen atom to form the C-terminus of the beta chain, while the remainder of the serine residue undergoes an oxidative deamination to produce ammonia and the pyruvoyl group blocking the N-terminus of the alpha chain.

It catalyses the reaction S-adenosyl-L-methionine + H(+) = S-adenosyl 3-(methylsulfanyl)propylamine + CO2. It functions in the pathway amine and polyamine biosynthesis; S-adenosylmethioninamine biosynthesis; S-adenosylmethioninamine from S-adenosyl-L-methionine: step 1/1. Functionally, essential for biosynthesis of the polyamines spermidine and spermine. Promotes maintenance and self-renewal of embryonic stem cells, by maintaining spermine levels. The chain is S-adenosylmethionine decarboxylase proenzyme (amd1) from Xenopus laevis (African clawed frog).